The following is a 228-amino-acid chain: Cell surface Cu-only superoxide dismutase 5 (228 aa).

An N-terminal signal peptide occupies residues 1–15 (MKYLSIFLLATFALA). N-linked (GlcNAc...) asparagine glycosylation occurs at asparagine 53. Cu cation contacts are provided by histidine 75 and histidine 77. The N-linked (GlcNAc...) asparagine glycan is linked to asparagine 86. A disulfide bridge links cysteine 87 with cysteine 162. Histidine 93 provides a ligand contact to Cu cation. A glycan (N-linked (GlcNAc...) asparagine) is linked at asparagine 98. Histidine 153 is a Cu cation binding site. Asparagine 156, asparagine 164, asparagine 176, asparagine 181, and asparagine 192 each carry an N-linked (GlcNAc...) asparagine glycan. A compositionally biased stretch (low complexity) spans 176-201 (NTTMSNSSSSSSQSAVNTSSSMASTA). Positions 176-204 (NTTMSNSSSSSSQSAVNTSSSMASTAPQG) are disordered. Residue asparagine 205 is the site of GPI-anchor amidated asparagine attachment. Residues 206 to 228 (GAERAVVNGLLAAGVVGVIAALI) constitute a propeptide, removed in mature form.

This sequence belongs to the Cu-Zn superoxide dismutase family. As to quaternary structure, monomer. Requires Cu cation as cofactor. In terms of processing, the GPI-anchor is attached to the protein in the endoplasmic reticulum and serves to target the protein to the cell surface. There, the glucosamine-inositol phospholipid moiety is cleaved off and the GPI-modified mannoprotein is covalently attached via its lipidless GPI glycan remnant to the 1,6-beta-glucan of the outer cell wall layer.

The protein resides in the secreted. Its subcellular location is the cell wall. The protein localises to the membrane. The catalysed reaction is 2 superoxide + 2 H(+) = H2O2 + O2. Its activity is regulated as follows. Secreted in a disulfide-oxidized form and apo-pools of secreted SOD5 can readily capture extracellular copper for rapid induction of enzyme activity. Superoxide dismutases serve to convert damaging superoxide radicals, a key form of ROS, to less damaging hydrogen peroxide that can be converted into water by catalase action. Degrades host-derived reactive oxygen species to escape innate immune surveillance. Involved in the occurrence of miconazole-tolerant persisters in biofilms. Persisters are cells that survive high doses of an antimicrobial agent. The unusual attributes of SOD5-like fungal proteins, including the absence of zinc and an open active site that readily captures extracellular copper, make these SODs well suited to meet challenges in zinc and copper availability at the host-pathogen interface. This Candida albicans (strain SC5314 / ATCC MYA-2876) (Yeast) protein is Cell surface Cu-only superoxide dismutase 5 (SOD5).